A 280-amino-acid polypeptide reads, in one-letter code: uncharacterized protein (280 aa).

The KilA-N domain occupies 26-127; the sequence is YFMSMKLLDV…TRVSILMRYY (102 aa).

This is an uncharacterized protein from Vertebrata (FPV).